A 118-amino-acid polypeptide reads, in one-letter code: UPF0102 protein NE0711 (118 aa).

Belongs to the UPF0102 family.

The sequence is that of UPF0102 protein NE0711 from Nitrosomonas europaea (strain ATCC 19718 / CIP 103999 / KCTC 2705 / NBRC 14298).